A 189-amino-acid polypeptide reads, in one-letter code: ATP synthase subunit delta (189 aa).

This sequence belongs to the ATPase delta chain family. F-type ATPases have 2 components, F(1) - the catalytic core - and F(0) - the membrane proton channel. F(1) has five subunits: alpha(3), beta(3), gamma(1), delta(1), epsilon(1). F(0) has three main subunits: a(1), b(2) and c(10-14). The alpha and beta chains form an alternating ring which encloses part of the gamma chain. F(1) is attached to F(0) by a central stalk formed by the gamma and epsilon chains, while a peripheral stalk is formed by the delta and b chains.

The protein localises to the cell inner membrane. F(1)F(0) ATP synthase produces ATP from ADP in the presence of a proton or sodium gradient. F-type ATPases consist of two structural domains, F(1) containing the extramembraneous catalytic core and F(0) containing the membrane proton channel, linked together by a central stalk and a peripheral stalk. During catalysis, ATP synthesis in the catalytic domain of F(1) is coupled via a rotary mechanism of the central stalk subunits to proton translocation. Its function is as follows. This protein is part of the stalk that links CF(0) to CF(1). It either transmits conformational changes from CF(0) to CF(1) or is implicated in proton conduction. The polypeptide is ATP synthase subunit delta (Ehrlichia ruminantium (strain Gardel)).